A 21-amino-acid polypeptide reads, in one-letter code: Fibrinogen beta chain (21 aa).

Gln-1 is modified (pyrrolidone carboxylic acid). Over residues 1 to 10 the composition is skewed to acidic residues; it reads QFPTDYDEGQ. Residues 1–21 are disordered; that stretch reads QFPTDYDEGQDDRPKLGLGAR. An O-linked (GalNAc...) threonine glycan is attached at Thr-4. Tyr-6 is subject to Sulfotyrosine.

As to quaternary structure, heterohexamer; disulfide linked. Contains 2 sets of 3 non-identical chains (alpha, beta and gamma). The 2 heterotrimers are in head to head conformation with the N-termini in a small central domain. Conversion of fibrinogen to fibrin is triggered by thrombin, which cleaves fibrinopeptides A and B from alpha and beta chains, and thus exposes the N-terminal polymerization sites responsible for the formation of the soft clot.

Its subcellular location is the secreted. Cleaved by the protease thrombin to yield monomers which, together with fibrinogen alpha (FGA) and fibrinogen gamma (FGG), polymerize to form an insoluble fibrin matrix. Fibrin has a major function in hemostasis as one of the primary components of blood clots. In addition, functions during the early stages of wound repair to stabilize the lesion and guide cell migration during re-epithelialization. Was originally thought to be essential for platelet aggregation, based on in vitro studies using anticoagulated blood. However subsequent studies have shown that it is not absolutely required for thrombus formation in vivo. Enhances expression of SELP in activated platelets. Maternal fibrinogen is essential for successful pregnancy. Fibrin deposition is also associated with infection, where it protects against IFNG-mediated hemorrhage. May also facilitate the antibacterial immune response via both innate and T-cell mediated pathways. This chain is Fibrinogen beta chain (FGB), found in Bubalus bubalis (Domestic water buffalo).